Consider the following 423-residue polypeptide: tRNA(Ile)-lysidine synthase (423 aa).

29–34 (SGGKDS) lines the ATP pocket.

The protein belongs to the tRNA(Ile)-lysidine synthase family.

Its subcellular location is the cytoplasm. It carries out the reaction cytidine(34) in tRNA(Ile2) + L-lysine + ATP = lysidine(34) in tRNA(Ile2) + AMP + diphosphate + H(+). Functionally, ligates lysine onto the cytidine present at position 34 of the AUA codon-specific tRNA(Ile) that contains the anticodon CAU, in an ATP-dependent manner. Cytidine is converted to lysidine, thus changing the amino acid specificity of the tRNA from methionine to isoleucine. The polypeptide is tRNA(Ile)-lysidine synthase (Lactococcus lactis subsp. lactis (strain IL1403) (Streptococcus lactis)).